A 500-amino-acid chain; its full sequence is Maturase K (500 aa).

It belongs to the intron maturase 2 family. MatK subfamily.

Its subcellular location is the plastid. The protein resides in the chloroplast. In terms of biological role, usually encoded in the trnK tRNA gene intron. Probably assists in splicing its own and other chloroplast group II introns. The protein is Maturase K of Proboscidea louisianica (Louisiana Devil's-claw).